Consider the following 151-residue polypeptide: UPF0208 membrane protein plu3094 (151 aa).

2 helical membrane-spanning segments follow: residues 46–65 (FGIR…QIAL) and 69–91 (LGPA…WWLG).

This sequence belongs to the UPF0208 family.

It localises to the cell inner membrane. This is UPF0208 membrane protein plu3094 from Photorhabdus laumondii subsp. laumondii (strain DSM 15139 / CIP 105565 / TT01) (Photorhabdus luminescens subsp. laumondii).